Here is a 274-residue protein sequence, read N- to C-terminus: Leucyl/phenylalanyl-tRNA--protein transferase (274 aa).

The protein belongs to the L/F-transferase family.

It is found in the cytoplasm. The catalysed reaction is N-terminal L-lysyl-[protein] + L-leucyl-tRNA(Leu) = N-terminal L-leucyl-L-lysyl-[protein] + tRNA(Leu) + H(+). It catalyses the reaction N-terminal L-arginyl-[protein] + L-leucyl-tRNA(Leu) = N-terminal L-leucyl-L-arginyl-[protein] + tRNA(Leu) + H(+). The enzyme catalyses L-phenylalanyl-tRNA(Phe) + an N-terminal L-alpha-aminoacyl-[protein] = an N-terminal L-phenylalanyl-L-alpha-aminoacyl-[protein] + tRNA(Phe). Its function is as follows. Functions in the N-end rule pathway of protein degradation where it conjugates Leu, Phe and, less efficiently, Met from aminoacyl-tRNAs to the N-termini of proteins containing an N-terminal arginine or lysine. The sequence is that of Leucyl/phenylalanyl-tRNA--protein transferase from Psychrobacter cryohalolentis (strain ATCC BAA-1226 / DSM 17306 / VKM B-2378 / K5).